A 415-amino-acid chain; its full sequence is MIDRKLLLQDFDKVAHSLKKRNSVIDDGLERLREIITHYKKQLIELESLQAFQNKVSKEFGIKMTQKVDASDLKKELENNKIKLNELSKSVSELEQKIDLKLSIIPNLVDEKTPLGTSEEDNIEIKKILTPRDFTFTPKEHFELAQKNGWIDFESGVKLAKSRFSVIRGFGAKVYRALIHLMLDFNEKNGFEIIYTPALVNEKMLFGTGQLPKFKEDVFKIENENLYLIPTAEVTLTNLYNDTIISVEKLPIKMTAHTPCFRSEAGSAGKDTRGMIRQHQFDKVELVAITHPKESDVMQEYMLESASGILKALELPHRFVQLCSGDLGFSASNTIDIEVWLPGQNCYREISSVSNTRDFQARRAKIRFKENQKNQLVHTLNGSSLAVGRTMVALMENHQQADGSIHIPKALEKYL.

Position 231-233 (T231–E233) interacts with L-serine. R262 to E264 serves as a coordination point for ATP. E285 provides a ligand contact to L-serine. An ATP-binding site is contributed by E349–S352. S383 contributes to the L-serine binding site.

The protein belongs to the class-II aminoacyl-tRNA synthetase family. Type-1 seryl-tRNA synthetase subfamily. In terms of assembly, homodimer. The tRNA molecule binds across the dimer.

It is found in the cytoplasm. It catalyses the reaction tRNA(Ser) + L-serine + ATP = L-seryl-tRNA(Ser) + AMP + diphosphate + H(+). It carries out the reaction tRNA(Sec) + L-serine + ATP = L-seryl-tRNA(Sec) + AMP + diphosphate + H(+). It functions in the pathway aminoacyl-tRNA biosynthesis; selenocysteinyl-tRNA(Sec) biosynthesis; L-seryl-tRNA(Sec) from L-serine and tRNA(Sec): step 1/1. Catalyzes the attachment of serine to tRNA(Ser). Is also able to aminoacylate tRNA(Sec) with serine, to form the misacylated tRNA L-seryl-tRNA(Sec), which will be further converted into selenocysteinyl-tRNA(Sec). The chain is Serine--tRNA ligase from Helicobacter acinonychis (strain Sheeba).